The primary structure comprises 425 residues: Inhibin beta A chain (425 aa).

Positions 1 to 20 (MPLLWLRGFLLASCWIIVRS) are cleaved as a signal peptide. Residues 21–309 (SPTPGSEGHS…EDHPHRRRRR (289 aa)) constitute a propeptide that is removed on maturation. The N-linked (GlcNAc...) asparagine glycan is linked to N165. The segment at 260–289 (KKRKEEEGEGKKRDGEGGAGGDEEKEQSHR) is disordered. The segment covering 263-275 (KEEEGEGKKRDGE) has biased composition (basic and acidic residues). 4 disulfide bridges follow: C313–C321, C320–C390, C349–C422, and C353–C424.

It belongs to the TGF-beta family. In terms of assembly, dimeric, linked by one or more disulfide bonds. Inhibin A is a dimer of alpha/INHA and beta-A/INHBA. Activin A is a homodimer of beta-A/INHBA. Activin AB is a dimer of beta-A/INHBA and beta-B/INHBB. Interacts with FST and FSTL3; these interactions prevent activin A interaction to its type II receptor. Activin A interacts with ACVR2A. Activin A interacts with BMPR2. Inhibin A interacts with ACVR1; this interaction creates a non-signaling complex (NSC) that inhibits ACVR1-mediated BMP signaling. Inhibin A interacts with ACVR2A.

It is found in the secreted. Inhibins/activins are involved in regulating a number of diverse functions such as hypothalamic and pituitary hormone secretion, gonadal hormone secretion, germ cell development and maturation, erythroid differentiation, insulin secretion, nerve cell survival, embryonic axial development or bone growth, depending on their subunit composition. Functionally, activin A is a homodimer of INHBA that plays a role in several essential biological processes including embryonic development, stem cell maintenance and differentiation, haematopoiesis, cell proliferation and tissue fibrosis. Signals through type I (such as ACVR1B or ACVR1C) and type II receptors (such as ACVR2A, ACVR2B or BMPR2) which, upon ligand binding, phosphorylate SMAD2 and SMAD3 intracellular signaling mediators that form a complex with SMAD4, translocate to the nucleus and modulate gene expression. Can also activate alternative non-canonical intracellular signaling pathways including the p38 MAPK, extracellular signal-regulated kinases 1/2 (ERK1/2) and c-Jun N-terminal kinases (JNKs) to modulate cell migration and differentiation. Alternatively, promotes osteoblastic differentiation via ACVRL1-SMAD1/5/9 pathway. In addition, can engage the type I receptor ACVR1 to form an ACVR1-activin A-type II receptor non-signaling complex (NSC) that renders receptors unavailable for engagement with BMPs, hence resulting in an apparent inhibition of ACVR1-mediated BMP signaling. Its function is as follows. Inhibin A is a dimer of alpha/INHA and beta-A/INHBA that functions as a feedback regulator in the hypothalamic-pituitary-gonadal (HPG) axis. Inhibits the secretion of FSH from the anterior pituitary gland by acting on pituitary gonadotrope cells. Antagonizes activin A by binding to the proteoglycan, betaglycan, and forming a stable complex with and, thereby, sequestering type II activin receptors while excluding type I receptor. This chain is Inhibin beta A chain (INHBA), found in Ovis aries (Sheep).